A 68-amino-acid chain; its full sequence is KCNQ1 downstream neighbor protein (68 aa).

Residues G28 to E68 are disordered.

As to expression, shows reduced expression in Wilms' tumor samples.

The polypeptide is KCNQ1 downstream neighbor protein (KCNQ1DN) (Homo sapiens (Human)).